The sequence spans 232 residues: Large ribosomal subunit protein uL1 (232 aa).

Belongs to the universal ribosomal protein uL1 family. In terms of assembly, part of the 50S ribosomal subunit.

Its function is as follows. Binds directly to 23S rRNA. The L1 stalk is quite mobile in the ribosome, and is involved in E site tRNA release. Functionally, protein L1 is also a translational repressor protein, it controls the translation of the L11 operon by binding to its mRNA. In Methylobacterium radiotolerans (strain ATCC 27329 / DSM 1819 / JCM 2831 / NBRC 15690 / NCIMB 10815 / 0-1), this protein is Large ribosomal subunit protein uL1.